The primary structure comprises 243 residues: ABC transporter arginine-binding protein 1 (243 aa).

The N-terminal stretch at 1–19 (MKKLVLAALLASFTFGASA) is a signal peptide.

It belongs to the bacterial solute-binding protein 3 family. As to quaternary structure, the complex is composed of two ATP-binding proteins (ArtP), two transmembrane proteins (ArtM and ArtQ) and two solute-binding proteins (ArtJ and ArtI).

It is found in the periplasm. Functionally, part of the ABC transporter complex ArtPIQMJ involved in arginine transport. Binds L-arginine with high affinity. This is ABC transporter arginine-binding protein 1 (artJ) from Escherichia coli (strain K12).